Here is a 692-residue protein sequence, read N- to C-terminus: Methionine--tRNA ligase (692 aa).

The 'HIGH' region signature appears at 12 to 22 (PYANGSFHIGH). Residues Cys143, Cys146, Cys156, and Cys159 each contribute to the Zn(2+) site. Residues 341 to 345 (KMSKS) carry the 'KMSKS' region motif. Lys344 is an ATP binding site. The 107-residue stretch at 586–692 (DFAKIDLRIA…PGAQPGMRVR (107 aa)) folds into the tRNA-binding domain.

The protein belongs to the class-I aminoacyl-tRNA synthetase family. MetG type 1 subfamily. Homodimer. The cofactor is Zn(2+).

It is found in the cytoplasm. The enzyme catalyses tRNA(Met) + L-methionine + ATP = L-methionyl-tRNA(Met) + AMP + diphosphate. Its function is as follows. Is required not only for elongation of protein synthesis but also for the initiation of all mRNA translation through initiator tRNA(fMet) aminoacylation. The protein is Methionine--tRNA ligase of Bordetella bronchiseptica (strain ATCC BAA-588 / NCTC 13252 / RB50) (Alcaligenes bronchisepticus).